The primary structure comprises 51 residues: Protein YrhD (51 aa).

In Escherichia coli (strain K12), this protein is Protein YrhD (yrhD).